The primary structure comprises 518 residues: Crotonobetaine/carnitine--CoA ligase (518 aa).

The protein belongs to the ATP-dependent AMP-binding enzyme family.

The catalysed reaction is 4-(trimethylamino)butanoate + ATP + CoA = 4-(trimethylamino)butanoyl-CoA + AMP + diphosphate. The enzyme catalyses crotonobetaine + ATP + CoA = crotonobetainyl-CoA + AMP + diphosphate. It carries out the reaction (R)-carnitine + ATP + CoA = (R)-carnitinyl-CoA + AMP + diphosphate. Its pathway is amine and polyamine metabolism; carnitine metabolism. Catalyzes the transfer of CoA to carnitine, generating the initial carnitinyl-CoA needed for the CaiB reaction cycle. Also has activity toward crotonobetaine and gamma-butyrobetaine. The sequence is that of Crotonobetaine/carnitine--CoA ligase from Proteus mirabilis (strain HI4320).